Consider the following 546-residue polypeptide: MTTNYIFVTGGVVSSLGKGIAAASLAAILEARGLKVTMMKLDPYINVDPGTMSPTQHGEVFVTEDGAETDLDLGHYERFIRTKMTKRNNFTAGRVYADVLRKERRGDYLGATIQVIPHITNAIKDRVIAGSEGHDVAIVEVGGTVGDIESLPFMEAIRQLAVELGRERAMFMHLTLVPYLAAAGEVKTKPTQHSVKELLSIGIQPDILVCRSDRMIPANERKKIALFCNVQEKAVISMKDVDSIYKIPQLVKSQGLDDLVCARFGINAPEADLSEWEQVIYEEANPTGEVTIGMVGKYIELPDAYKSVNEALKHAGLKNRLNVTIKYVDSQDVETKGVEVLEGLDAILVPGGFGDRGIEGKIRAAQYARENKVPYLGICLGMQVALIEYARNVAGMEGAHSTEFNKDTKYPVVGLITEWVDGEGKVEERTETSDLGGTMRLGSQLCHLEKGTKARELYGNATIHERHRHRYEVNNNLRPQIEKAGLKVSGLSADKKLVEMIENPAHPWFVAAQFHPEFTSTPRDGHPLFAGFVKAAGQNARGEFEK.

An amidoligase domain region spans residues 1-266; sequence MTTNYIFVTG…DDLVCARFGI (266 aa). Residue serine 14 coordinates CTP. Residue serine 14 participates in UTP binding. ATP is bound by residues 15-20 and aspartate 72; that span reads SLGKGI. Residues aspartate 72 and glutamate 140 each contribute to the Mg(2+) site. CTP is bound by residues 147–149, 187–192, and lysine 223; these read DIE and KTKPTQ. Residues 187-192 and lysine 223 each bind UTP; that span reads KTKPTQ. 239 to 241 contacts ATP; the sequence is KDV. In terms of domain architecture, Glutamine amidotransferase type-1 spans 291–542; the sequence is TIGMVGKYIE…VKAAGQNARG (252 aa). Glycine 352 lines the L-glutamine pocket. The active-site Nucleophile; for glutamine hydrolysis is cysteine 379. Residues 380–383, glutamate 403, and arginine 470 each bind L-glutamine; that span reads LGMQ. Active-site residues include histidine 515 and glutamate 517.

Belongs to the CTP synthase family. As to quaternary structure, homotetramer.

It catalyses the reaction UTP + L-glutamine + ATP + H2O = CTP + L-glutamate + ADP + phosphate + 2 H(+). The catalysed reaction is L-glutamine + H2O = L-glutamate + NH4(+). It carries out the reaction UTP + NH4(+) + ATP = CTP + ADP + phosphate + 2 H(+). It functions in the pathway pyrimidine metabolism; CTP biosynthesis via de novo pathway; CTP from UDP: step 2/2. Allosterically activated by GTP, when glutamine is the substrate; GTP has no effect on the reaction when ammonia is the substrate. The allosteric effector GTP functions by stabilizing the protein conformation that binds the tetrahedral intermediate(s) formed during glutamine hydrolysis. Inhibited by the product CTP, via allosteric rather than competitive inhibition. Its function is as follows. Catalyzes the ATP-dependent amination of UTP to CTP with either L-glutamine or ammonia as the source of nitrogen. Regulates intracellular CTP levels through interactions with the four ribonucleotide triphosphates. This Vibrio campbellii (strain ATCC BAA-1116) protein is CTP synthase.